A 2839-amino-acid chain; its full sequence is Bifunctional DNA-directed RNA polymerase subunit beta-beta' (2839 aa).

Residues 1–1433 are DNA-directed RNA polymerase subunit beta; it reads MVDSSYMCAS…CLNVALKQNN (1433 aa). A DNA-directed RNA polymerase subunit beta' region spans residues 1436–2839; sequence IEDISHTNIA…KESVAESRYN (1404 aa). Positions 1501, 1503, 1516, and 1519 each coordinate Zn(2+). Aspartate 1893, aspartate 1895, and aspartate 1897 together coordinate Mg(2+). Zn(2+) contacts are provided by cysteine 2238, cysteine 2312, cysteine 2319, and cysteine 2322.

This sequence in the N-terminal section; belongs to the RNA polymerase beta chain family. In the C-terminal section; belongs to the RNA polymerase beta' chain family. As to quaternary structure, the RNAP catalytic core consists of 2 alpha, 1 beta/beta' and 1 omega subunit. When a sigma factor is associated with the core the holoenzyme is formed, which can initiate transcription. It depends on Mg(2+) as a cofactor. Zn(2+) is required as a cofactor.

The enzyme catalyses RNA(n) + a ribonucleoside 5'-triphosphate = RNA(n+1) + diphosphate. Its function is as follows. DNA-dependent RNA polymerase catalyzes the transcription of DNA into RNA using the four ribonucleoside triphosphates as substrates. The sequence is that of Bifunctional DNA-directed RNA polymerase subunit beta-beta' (rpoBC) from Wolbachia sp. subsp. Brugia malayi (strain TRS).